A 455-amino-acid polypeptide reads, in one-letter code: Ribulose bisphosphate carboxylase large chain (455 aa).

K5 carries the N6,N6,N6-trimethyllysine modification. Substrate-binding residues include N114 and T164. Residue K166 is the Proton acceptor of the active site. Residue K168 coordinates substrate. Positions 192, 194, and 195 each coordinate Mg(2+). K192 is modified (N6-carboxylysine). H285 acts as the Proton acceptor in catalysis. Residues R286, H318, and S370 each coordinate substrate.

Belongs to the RuBisCO large chain family. Type I subfamily. In terms of assembly, heterohexadecamer of 8 large chains and 8 small chains; disulfide-linked. The disulfide link is formed within the large subunit homodimers. Requires Mg(2+) as cofactor. Post-translationally, the disulfide bond which can form in the large chain dimeric partners within the hexadecamer appears to be associated with oxidative stress and protein turnover.

It localises to the plastid. The protein localises to the chloroplast. It carries out the reaction 2 (2R)-3-phosphoglycerate + 2 H(+) = D-ribulose 1,5-bisphosphate + CO2 + H2O. The catalysed reaction is D-ribulose 1,5-bisphosphate + O2 = 2-phosphoglycolate + (2R)-3-phosphoglycerate + 2 H(+). In terms of biological role, ruBisCO catalyzes two reactions: the carboxylation of D-ribulose 1,5-bisphosphate, the primary event in carbon dioxide fixation, as well as the oxidative fragmentation of the pentose substrate in the photorespiration process. Both reactions occur simultaneously and in competition at the same active site. In Lupinus nanus (Sky lupine), this protein is Ribulose bisphosphate carboxylase large chain.